We begin with the raw amino-acid sequence, 438 residues long: Ammonium transporter Rh type A (438 aa).

The Cytoplasmic segment spans residues 1–4 (MRFK). Residues 5-25 (FPLMAISLEVAMIVLFGLFVE) form a helical membrane-spanning segment. Topologically, residues 26-61 (YETPQNASQKNASHQNASQQGNTSSSAKKDQFFQLY) are extracellular. 4 N-linked (GlcNAc...) asparagine glycosylation sites follow: N31, N36, N41, and N47. The chain crosses the membrane as a helical span at residues 62-82 (PLFQDVHVMIFVGFGFLMTFL). Topologically, residues 83 to 86 (KKYG) are cytoplasmic. A helical membrane pass occupies residues 87-107 (FSGVGFNLFLAALGLQWGTIM). Over 108–121 (QGLLHSHGKEFHFG) the chain is Extracellular. Residues 122 to 142 (IYNMINADFSTATVLISFGAV) form a helical membrane-spanning segment. Over 143–148 (LGKTSP) the chain is Cytoplasmic. The chain crosses the membrane as a helical span at residues 149 to 169 (IQMLIMTILEIAVFAGNEYLV). The Extracellular portion of the chain corresponds to 170-178 (TELFEASDT). A helical transmembrane segment spans residues 179-199 (GASMTIHAFGAYFGLAVAGVL). Over 200–218 (YRPGLRCEHPNDESVYHSD) the chain is Cytoplasmic. A helical transmembrane segment spans residues 219–239 (LFAMIGTLFLWIFWPSFNSAI). The Extracellular segment spans residues 240-249 (ADPGDHQYRA). The chain crosses the membrane as a helical span at residues 250-270 (IVNTYMSLAACVITAYALSSL). The Cytoplasmic segment spans residues 271-278 (VERRGRLD). A helical membrane pass occupies residues 279-296 (MVHIQNATLAGGVAVGTC). Topologically, residues 297–300 (ADME) are extracellular. A helical transmembrane segment spans residues 301-321 (IPLYAAMTIGSIAGIISVLGY). At 322–342 (KFFSPLLANKLMIHDTCGVHN) the chain is on the cytoplasmic side. Residues 343 to 363 (LHGLPGVFGGLASIVAISWGM) traverse the membrane as a helical segment. Topologically, residues 364–372 (STASMAMQA) are extracellular. The chain crosses the membrane as a helical span at residues 373–393 (AALGSSIGSAIVGGLLTGLIL). Residues 394 to 438 (KLPIWNQPPDEYCYDDSVSWKVPKFRELDNRFFQHANHNHVEHEV) are Cytoplasmic-facing.

It belongs to the ammonium transporter (TC 2.A.49) family. Rh subfamily. Homodimer. Heterotrimer; a RHCE monomer interacts with a RHAG homodimer. Component of the ankyrin-1 complex in the erythrocyte, composed of ANK1, RHCE, RHAG, SLC4A1, EPB42, GYPA, GYPB and AQP1. Interacts with GYPB (via the N-terminal); this interaction bridges the (RHAG)2(RHCE) heterotrimer with the SLC4A1 Band 3 I dimer complexed with GYPA. In terms of processing, glycosylated.

It is found in the membrane. It catalyses the reaction methylamine(out) = methylamine(in). It carries out the reaction NH4(+)(in) = NH4(+)(out). The catalysed reaction is CO2(out) = CO2(in). Component of the ankyrin-1 complex, a multiprotein complex involved in the stability and shape of the erythrocyte membrane. Heterotrimer with RHCE (RHAG)2(RHCE), that transports ammonium and its related derivative methylammonium, in both neutral and ionic forms, across the erythrocyte membrane. The transport of NH4(+) is electrogenic and masks the NH3 transport. Also, may act as a CO2 channel. Moreover in erythrocyte, regulates RHD membrane expression and is associated with rhesus blood group antigen expression. This chain is Ammonium transporter Rh type A, found in Mus musculus (Mouse).